A 200-amino-acid polypeptide reads, in one-letter code: ATP-dependent Clp protease proteolytic subunit 3 (200 aa).

The active-site Nucleophile is the serine 101. Histidine 126 is an active-site residue.

This sequence belongs to the peptidase S14 family. In terms of assembly, fourteen ClpP subunits assemble into 2 heptameric rings which stack back to back to give a disk-like structure with a central cavity, resembling the structure of eukaryotic proteasomes.

The protein resides in the cytoplasm. The enzyme catalyses Hydrolysis of proteins to small peptides in the presence of ATP and magnesium. alpha-casein is the usual test substrate. In the absence of ATP, only oligopeptides shorter than five residues are hydrolyzed (such as succinyl-Leu-Tyr-|-NHMec, and Leu-Tyr-Leu-|-Tyr-Trp, in which cleavage of the -Tyr-|-Leu- and -Tyr-|-Trp bonds also occurs).. Cleaves peptides in various proteins in a process that requires ATP hydrolysis. Has a chymotrypsin-like activity. Plays a major role in the degradation of misfolded proteins. In Synechococcus sp. (strain CC9605), this protein is ATP-dependent Clp protease proteolytic subunit 3.